The primary structure comprises 404 residues: Coenzyme F420H(2) oxidase (404 aa).

7 residues coordinate Fe cation: H84, E86, D88, H89, H152, D170, and H233. The 141-residue stretch at 259-399 (VTVIYDTMHH…ACFEAGRRLA (141 aa)) folds into the Flavodoxin-like domain. FMN is bound by residues 265–270 (TMHHST), 317–320 (AIYD), and 351–356 (SMGGRG).

It in the N-terminal section; belongs to the zinc metallo-hydrolase group 3 family. It depends on FMN as a cofactor. Requires Fe cation as cofactor.

It catalyses the reaction 2 reduced coenzyme F420-(gamma-L-Glu)(n) + O2 = 2 oxidized coenzyme F420-(gamma-L-Glu)(n) + 2 H2O + 2 H(+). In terms of biological role, catalyzes the oxidation of F420H(2) with O(2). May be involved in O(2) detoxification, reducing the intracellular O(2) concentration to a level allowing growth at the expense of methane formation. This Methanothermobacter thermautotrophicus (strain ATCC 29096 / DSM 1053 / JCM 10044 / NBRC 100330 / Delta H) (Methanobacterium thermoautotrophicum) protein is Coenzyme F420H(2) oxidase.